The primary structure comprises 135 residues: C-type lectin PAL (135 aa).

4 disulfide bridges follow: cysteine 3-cysteine 14, cysteine 31-cysteine 131, cysteine 38-cysteine 133, and cysteine 106-cysteine 123. A C-type lectin domain is found at 10-132; it reads MNGLCYKIFD…CGSKNAFLCQ (123 aa). Ca(2+) is bound by residues glutamine 96, aspartate 98, glutamate 104, asparagine 119, and aspartate 120. A Galactose-binding motif is present at residues 96–98; it reads QPD.

The protein belongs to the true venom lectin family. As to quaternary structure, homodimer; disulfide-linked. As to expression, expressed by the venom gland.

It is found in the secreted. In terms of biological role, galactose-binding lectin which recognizes specific carbohydrate structures and agglutinates a variety of animal cells by binding to cell-surface glycoproteins and glycolipids. This is a calcium-dependent lectin. Shows high hemagglutinating activity (MHC is 0.25 ug/ml on rabbit erythrocytes). The polypeptide is C-type lectin PAL (Bitis arietans (African puff adder)).